Here is a 332-residue protein sequence, read N- to C-terminus: Tetraacyldisaccharide 4'-kinase (332 aa).

58–65 (TVGGSGKT) is a binding site for ATP.

The protein belongs to the LpxK family.

The enzyme catalyses a lipid A disaccharide + ATP = a lipid IVA + ADP + H(+). The protein operates within glycolipid biosynthesis; lipid IV(A) biosynthesis; lipid IV(A) from (3R)-3-hydroxytetradecanoyl-[acyl-carrier-protein] and UDP-N-acetyl-alpha-D-glucosamine: step 6/6. Functionally, transfers the gamma-phosphate of ATP to the 4'-position of a tetraacyldisaccharide 1-phosphate intermediate (termed DS-1-P) to form tetraacyldisaccharide 1,4'-bis-phosphate (lipid IVA). The polypeptide is Tetraacyldisaccharide 4'-kinase (Shewanella piezotolerans (strain WP3 / JCM 13877)).